We begin with the raw amino-acid sequence, 277 residues long: 4-hydroxy-3-prenylphenylpyruvate oxygenase/4-hydroxy-3-prenylbenzoate synthase (277 aa).

This sequence belongs to the aldolase class II family. As to quaternary structure, homotetramer. It depends on Fe(2+) as a cofactor.

It carries out the reaction 3-dimethylallyl-4-hydroxyphenylpyruvate + O2 = 3-dimethylallyl-4-hydroxymandelate + CO2. It catalyses the reaction 3-dimethylallyl-4-hydroxymandelate + O2 = 3-dimethylallyl-4-hydroxybenzoate + CO2 + H2O. Its pathway is antibiotic biosynthesis. Activated by ascorbate. Involved in the biosynthesis of ring A of the aminocoumarin antibiotic clorobiocin. Catalyzes two consecutive oxidative decarboxylations of 3-dimethylallyl-4-hydroxyphenylpyruvate (3DMA-4HPP) to yield 3-dimethylallyl-4-hydroxybenzoate (3DMA-4HB) via the 3-dimethylallyl-4-hydroxymandelic acid (3DMA-4HMA) intermediate. In Streptomyces roseochromogenus subsp. oscitans, this protein is 4-hydroxy-3-prenylphenylpyruvate oxygenase/4-hydroxy-3-prenylbenzoate synthase.